Here is a 375-residue protein sequence, read N- to C-terminus: Cyclic AMP receptor 2 (375 aa).

Over 1 to 10 the chain is Extracellular; it reads MTIMSDIIAQ. The chain crosses the membrane as a helical span at residues 11-30; sequence RTILLIADFSSIIGCSLVLI. The Cytoplasmic segment spans residues 31–44; it reads GFWRLKLLRNHITK. A helical transmembrane segment spans residues 45–65; that stretch reads IISLFCATSLFKDVISTIITL. The Extracellular segment spans residues 66–82; that stretch reads LYKPDQTESGFPCYLHA. Residues 83-108 form a helical membrane-spanning segment; it reads IVITFGSLACWLWTLMLSFSIYNLIV. At 109–119 the chain is on the cytoplasmic side; sequence RREPEPERFEK. A helical transmembrane segment spans residues 120–138; sequence FYFCLCYGLPLISTIVMLS. Residues 139-161 lie on the Extracellular side of the membrane; sequence THIIQPVGGWCWIGDNYDGYRFG. Residues 162-180 form a helical membrane-spanning segment; that stretch reads LFYGPFFFIWGTSAILVGL. Residues 181-204 are Cytoplasmic-facing; the sequence is TSKYTYSVIRSSVSDNKDKHMTYQ. Phosphoserine is present on S192. A helical membrane pass occupies residues 205-223; the sequence is FKLINYIVVFLVCWVFAIV. Residues 224-234 are Extracellular-facing; the sequence is NRILNGLNQFP. The helical transmembrane segment at 235–259 threads the bilayer; the sequence is TVPNVLHTYFSVSHGFYASITFIYN. The Cytoplasmic portion of the chain corresponds to 260–375; that stretch reads NPLMWRYFGA…NNINNKNDMI (116 aa). 2 positions are modified to phosphoserine: S298 and S303. The disordered stretch occupies residues 338–375; sequence PKENENQNHHHHHHHHHHHNHYNNNNNNNNINNKNDMI. The segment covering 346 to 358 has biased composition (basic residues); it reads HHHHHHHHHHHNH. Residues 359-375 are compositionally biased toward low complexity; that stretch reads YNNNNNNNNINNKNDMI.

Belongs to the G-protein coupled receptor 5 family. C-terminal Ser or Thr residues may be phosphorylated.

The protein resides in the membrane. In terms of biological role, receptor for cAMP. Coordinates the aggregation of individual cells into a multicellular organism and regulates the expression of a large number of developmentally regulated genes. The activity of this receptor is mediated by G proteins. Plays a key role during tip formation and late development; involved in cAMP-directed patterning of pre stalk cells as they sort before and during tip formation. The protein is Cyclic AMP receptor 2 (carB) of Dictyostelium discoideum (Social amoeba).